Consider the following 353-residue polypeptide: Quinolinate synthase (353 aa).

His47 and Ser68 together coordinate iminosuccinate. Cys113 contributes to the [4Fe-4S] cluster binding site. Iminosuccinate contacts are provided by residues 139 to 141 (YAN) and Ser156. Cys200 is a binding site for [4Fe-4S] cluster. Iminosuccinate contacts are provided by residues 226-228 (HPE) and Thr243. Cys297 lines the [4Fe-4S] cluster pocket.

This sequence belongs to the quinolinate synthase family. Type 1 subfamily. [4Fe-4S] cluster is required as a cofactor.

The protein resides in the cytoplasm. The catalysed reaction is iminosuccinate + dihydroxyacetone phosphate = quinolinate + phosphate + 2 H2O + H(+). It participates in cofactor biosynthesis; NAD(+) biosynthesis; quinolinate from iminoaspartate: step 1/1. In terms of biological role, catalyzes the condensation of iminoaspartate with dihydroxyacetone phosphate to form quinolinate. The chain is Quinolinate synthase from Erwinia tasmaniensis (strain DSM 17950 / CFBP 7177 / CIP 109463 / NCPPB 4357 / Et1/99).